Reading from the N-terminus, the 300-residue chain is MEKTKEKAERILLEPYKYLLQLPGKQVRTKLSQAFNHWLKVPEDKLQIIIEVTEMLHNASLLIDDIEDSSKLRRGFPVAHSIYGVPSVINSANYVYFLGLEKVLTLDHPDAVKLFTRQLLELHQGQGLDIYWRDTYTCPTEEEYKAMVLQKTGGLFGLAVGLMQLFSDYKEDLKPLLDTLGLFFQIRDDYANLHSKEYSENKSFCEDLTEGKFSFPTIHAIWSRPESTQVQNILRQRTENIDIKKYCVQYLEDVGSFEYTRYTLRELEAKAYKQIEACGGNPSLVALVKHLSKMFTEENE.

N-acetylmethionine is present on M1. Residues K25, R28, and H57 each coordinate isopentenyl diphosphate. Residues D64 and D68 each contribute to the Mg(2+) site. R73 is a dimethylallyl diphosphate binding site. R74 provides a ligand contact to isopentenyl diphosphate. Residues K151, T152, Q185, K202, and K212 each coordinate dimethylallyl diphosphate.

The protein belongs to the FPP/GGPP synthase family. Homohexamer; trimer of homodimers. Requires Mg(2+) as cofactor.

The protein localises to the cytoplasm. It is found in the perinuclear region. It localises to the myofibril. The protein resides in the sarcomere. Its subcellular location is the z line. It catalyses the reaction isopentenyl diphosphate + dimethylallyl diphosphate = (2E)-geranyl diphosphate + diphosphate. The enzyme catalyses isopentenyl diphosphate + (2E)-geranyl diphosphate = (2E,6E)-farnesyl diphosphate + diphosphate. It carries out the reaction isopentenyl diphosphate + (2E,6E)-farnesyl diphosphate = (2E,6E,10E)-geranylgeranyl diphosphate + diphosphate. It participates in isoprenoid biosynthesis; farnesyl diphosphate biosynthesis; farnesyl diphosphate from geranyl diphosphate and isopentenyl diphosphate: step 1/1. Its pathway is isoprenoid biosynthesis; geranyl diphosphate biosynthesis; geranyl diphosphate from dimethylallyl diphosphate and isopentenyl diphosphate: step 1/1. It functions in the pathway isoprenoid biosynthesis; geranylgeranyl diphosphate biosynthesis; geranylgeranyl diphosphate from farnesyl diphosphate and isopentenyl diphosphate: step 1/1. Its function is as follows. Catalyzes the trans-addition of the three molecules of IPP onto DMAPP to form geranylgeranyl pyrophosphate, an important precursor of carotenoids and geranylated proteins. The protein is Geranylgeranyl pyrophosphate synthase (Ggps1) of Rattus norvegicus (Rat).